We begin with the raw amino-acid sequence, 704 residues long: Polyribonucleotide nucleotidyltransferase (704 aa).

Residues Asp-487 and Asp-493 each contribute to the Mg(2+) site. Residues 554-613 enclose the KH domain; the sequence is PRLLTIKIHPDKIREVIGKGGSTIQAITKETGTQIDIQDDGTIIIASVNAIAAQAAKSRI. Residues 623 to 691 enclose the S1 motif domain; sequence GRIYEGKVAK…KQGRIRLSIK (69 aa).

It belongs to the polyribonucleotide nucleotidyltransferase family. In terms of assembly, component of the RNA degradosome, which is a multiprotein complex involved in RNA processing and mRNA degradation. Mg(2+) serves as cofactor.

It is found in the cytoplasm. The catalysed reaction is RNA(n+1) + phosphate = RNA(n) + a ribonucleoside 5'-diphosphate. Functionally, involved in mRNA degradation. Catalyzes the phosphorolysis of single-stranded polyribonucleotides processively in the 3'- to 5'-direction. This is Polyribonucleotide nucleotidyltransferase from Xanthomonas oryzae pv. oryzae (strain MAFF 311018).